Reading from the N-terminus, the 562-residue chain is Dihydroxy-acid dehydratase (562 aa).

Mg(2+) is bound at residue D78. C119 contacts [2Fe-2S] cluster. Mg(2+)-binding residues include D120 and K121. N6-carboxylysine is present on K121. C192 is a binding site for [2Fe-2S] cluster. E450 contributes to the Mg(2+) binding site. S476 serves as the catalytic Proton acceptor.

The protein belongs to the IlvD/Edd family. In terms of assembly, homodimer. Requires [2Fe-2S] cluster as cofactor. Mg(2+) serves as cofactor.

The catalysed reaction is (2R)-2,3-dihydroxy-3-methylbutanoate = 3-methyl-2-oxobutanoate + H2O. It catalyses the reaction (2R,3R)-2,3-dihydroxy-3-methylpentanoate = (S)-3-methyl-2-oxopentanoate + H2O. Its pathway is amino-acid biosynthesis; L-isoleucine biosynthesis; L-isoleucine from 2-oxobutanoate: step 3/4. It participates in amino-acid biosynthesis; L-valine biosynthesis; L-valine from pyruvate: step 3/4. In terms of biological role, functions in the biosynthesis of branched-chain amino acids. Catalyzes the dehydration of (2R,3R)-2,3-dihydroxy-3-methylpentanoate (2,3-dihydroxy-3-methylvalerate) into 2-oxo-3-methylpentanoate (2-oxo-3-methylvalerate) and of (2R)-2,3-dihydroxy-3-methylbutanoate (2,3-dihydroxyisovalerate) into 2-oxo-3-methylbutanoate (2-oxoisovalerate), the penultimate precursor to L-isoleucine and L-valine, respectively. The sequence is that of Dihydroxy-acid dehydratase from Nautilia profundicola (strain ATCC BAA-1463 / DSM 18972 / AmH).